The primary structure comprises 191 residues: tRNA-specific adenosine deaminase 2 (191 aa).

The 126-residue stretch at 20–145 (EETEKWMEQA…SVLDIASADL (126 aa)) folds into the CMP/dCMP-type deaminase domain. Residue His71 coordinates Zn(2+). Glu73 (proton donor) is an active-site residue. Residues Cys107 and Cys110 each contribute to the Zn(2+) site.

This sequence belongs to the cytidine and deoxycytidylate deaminase family. ADAT2 subfamily. The cofactor is Zn(2+).

The catalysed reaction is adenosine(34) in tRNA + H2O + H(+) = inosine(34) in tRNA + NH4(+). Probably participates in deamination of adenosine-34 to inosine in many tRNAs. The polypeptide is tRNA-specific adenosine deaminase 2 (DEADC1) (Bos taurus (Bovine)).